Consider the following 467-residue polypeptide: Glycogen synthase (467 aa).

Residue Lys16 participates in ADP-alpha-D-glucose binding.

The protein belongs to the glycosyltransferase 1 family. Bacterial/plant glycogen synthase subfamily.

It catalyses the reaction [(1-&gt;4)-alpha-D-glucosyl](n) + ADP-alpha-D-glucose = [(1-&gt;4)-alpha-D-glucosyl](n+1) + ADP + H(+). Its pathway is glycan biosynthesis; glycogen biosynthesis. Its function is as follows. Synthesizes alpha-1,4-glucan chains using ADP-glucose. This chain is Glycogen synthase, found in Paracoccus denitrificans (strain Pd 1222).